The sequence spans 347 residues: Photosystem II protein D1 (347 aa).

The next 3 helical transmembrane spans lie at Y31–I48, H120–F135, and W144–A158. Residue H120 participates in chlorophyll a binding. W128 contributes to the pheophytin a binding site. Positions 172 and 191 each coordinate [CaMn4O5] cluster. Residues F199–L220 form a helical membrane-spanning segment. A chlorophyll a-binding site is contributed by H200. A quinone-binding positions include H217 and S266–F267. A Fe cation-binding site is contributed by H217. H274 contributes to the Fe cation binding site. A helical membrane pass occupies residues F276 to L290. [CaMn4O5] cluster-binding residues include H334, E335, and D344.

The protein belongs to the reaction center PufL/M/PsbA/D family. As to quaternary structure, PSII is composed of 1 copy each of membrane proteins PsbA, PsbB, PsbC, PsbD, PsbE, PsbF, PsbH, PsbI, PsbJ, PsbK, PsbL, PsbM, PsbT, PsbX, PsbY, PsbZ, Psb30/Ycf12, at least 3 peripheral proteins of the oxygen-evolving complex and a large number of cofactors. It forms dimeric complexes. It depends on The D1/D2 heterodimer binds P680, chlorophylls that are the primary electron donor of PSII, and subsequent electron acceptors. It shares a non-heme iron and each subunit binds pheophytin, quinone, additional chlorophylls, carotenoids and lipids. D1 provides most of the ligands for the Mn4-Ca-O5 cluster of the oxygen-evolving complex (OEC). There is also a Cl(-1) ion associated with D1 and D2, which is required for oxygen evolution. The PSII complex binds additional chlorophylls, carotenoids and specific lipids. as a cofactor. Tyr-163 forms a radical intermediate that is referred to as redox-active TyrZ, YZ or Y-Z.

The protein resides in the plastid. Its subcellular location is the chloroplast thylakoid membrane. It carries out the reaction 2 a plastoquinone + 4 hnu + 2 H2O = 2 a plastoquinol + O2. In terms of biological role, photosystem II (PSII) is a light-driven water:plastoquinone oxidoreductase that uses light energy to abstract electrons from H(2)O, generating O(2) and a proton gradient subsequently used for ATP formation. It consists of a core antenna complex that captures photons, and an electron transfer chain that converts photonic excitation into a charge separation. The D1/D2 (PsbA/PsbD) reaction center heterodimer binds P680, the primary electron donor of PSII as well as several subsequent electron acceptors. The sequence is that of Photosystem II protein D1 from Alexandrium tamarense (Red tide dinoflagellate).